The sequence spans 544 residues: MSNNGLDIQDKPPAPPMRNTSTMIGAGSKDAGTLNHGSKPLPPNPEEKKKKDRFYRAILPGDKTNKKKEKERPEISLPSDFEHTIHVGFDAVTGEFTGMPEQWARLLQTSNITKSEQKKNPQAVLDVLEFYNSKKTSNSQKYMSFTDKSAEDYNSSNTLNVKAVSETPAVPPVSEDEDDDDDGTPPPVIAPRPEHTKSVYTRSVIEPLPITPTRDVATSPISPTENNTTPPDALTRNTEKQKKKPKMSDEEILEKLRSIVSVGDPKKKYTRFEKIGQGASGTVYTAMDVATGQEVAIKQMNLQQQPKKELIINEILVMRENKNPNIVNYLDSYLVGDELWVVMEYLAGGSLTDVVTETCMDEGQIAAVCRECLQALEFLHSNQVIHRDIKSDNILLGMDGSVKLTDFGFCAQITPEQSKRSTMVGTPYWMAPEVVTRKAYGPKVDIWSLGIMAIEMIEGEPPYLNENPLRALYLIATNGTPELQNPEKLSAIFRDFLNRCLEMDVEKRGSAKELLQHQFLKIAKPLSSLTPLIAAAKEATKNNH.

Positions 1-77 (MSNNGLDIQD…KEKERPEISL (77 aa)) are disordered. An N-acetylserine modification is found at S2. S21 carries the phosphoserine; by PKB and autocatalysis modification. Basic and acidic residues predominate over residues 68-77 (KEKERPEISL). The segment at 70 to 140 (KERPEISLPS…YNSKKTSNSQ (71 aa)) is autoregulatory region. The 14-residue stretch at 75 to 88 (ISLPSDFEHTIHVG) folds into the CRIB domain. The segment at 75 to 105 (ISLPSDFEHTIHVGFDAVTGEFTGMPEQWAR) is GTPase-binding. T84 bears the Phosphothreonine; by OXSR1 mark. At S115 the chain carries Phosphoserine. A phosphotyrosine mark is found at Y131 and Y142. Residues S144 and S149 each carry the phosphoserine; by autocatalysis modification. The residue at position 153 (Y153) is a Phosphotyrosine; by JAK2. The disordered stretch occupies residues 161–193 (VKAVSETPAVPPVSEDEDDDDDGTPPPVIAPRP). Phosphoserine is present on S174. Residues 174-183 (SEDEDDDDDG) show a composition bias toward acidic residues. Phosphothreonine is present on T184. S198 carries the post-translational modification Phosphoserine; by autocatalysis. Y200 bears the Phosphotyrosine; by JAK2 mark. S203 carries the post-translational modification Phosphoserine; by autocatalysis. A phosphothreonine mark is found at T211 and T218. The tract at residues 212 to 250 (PTRDVATSPISPTENNTTPPDALTRNTEKQKKKPKMSDE) is disordered. 2 positions are modified to phosphoserine: S219 and S222. Positions 219–230 (SPISPTENNTTP) are enriched in polar residues. Residues T224, T228, and T229 each carry the phosphothreonine modification. The region spanning 269-520 (YTRFEKIGQG…AKELLQHQFL (252 aa)) is the Protein kinase domain. 275 to 283 (IGQGASGTV) is an ATP binding site. Residue Y284 is modified to Phosphotyrosine; by JAK2. K298 provides a ligand contact to ATP. The active-site Proton acceptor is D388. At T422 the chain carries Phosphothreonine; by autocatalysis, BRSK2 and PDPK1.

The protein belongs to the protein kinase superfamily. STE Ser/Thr protein kinase family. STE20 subfamily. Homodimer in its autoinhibited state. Active as monomer. Interacts with GIT1. Component of cytoplasmic complexes, which also contains PXN, ARHGEF7 and GIT1. Interacts with NISCH. Interacts with DVL1; mediates the formation of a DVL1, MUSK and PAK1 ternary complex involved in AChR clustering. Binds to the caspase-cleaved p110 isoform of CDC2L1 and CDC2L2, p110C, but not the full-length proteins. Interacts with ARHGEF7. Interacts tightly with GTP-bound but not GDP-bound CDC42/P21 and RAC1. Probably found in a ternary complex composed of DSCAM, PAK1 and RAC1. Interacts with DSCAM (via cytoplasmic domain); the interaction is direct and enhanced in presence of RAC1. Interacts with SCRIB. Interacts with PDPK1. Interacts (via kinase domain) with RAF1. Interacts with NCK1 and NCK2. Interacts with TBCB. Interacts with BRSK2. Interacts with SNAI1. Interacts with CIB1 (via N-terminal region); the interaction is direct, promotes PAK1 activity and occurs in a calcium-dependent manner. Interacts with INPP5K. Interacts with gamma-tubulin. Interacts with RHOU; the interaction promotes PAK1 activation. Mg(2+) is required as a cofactor. Post-translationally, autophosphorylated in trans, meaning that in a dimer, one kinase molecule phosphorylates the other one. Activated by autophosphorylation at Thr-422 in response to a conformation change, triggered by interaction with GTP-bound CDC42 or RAC1. Activated by phosphorylation at Thr-422 by BRSK2 and by PDPK1. Phosphorylated by JAK2 in response to PRL; this increases PAK1 kinase activity. Phosphorylated at Ser-21 by PKB/AKT; this reduces interaction with NCK1 and association with focal adhesion sites. Upon DNA damage, phosphorylated at Thr-211 and translocates to the nucleoplasm. Phosphorylated at tyrosine residues, which can be enhanced by NTN1.

The protein resides in the cytoplasm. It is found in the cell junction. It localises to the focal adhesion. The protein localises to the cell projection. Its subcellular location is the lamellipodium. The protein resides in the cell membrane. It is found in the ruffle membrane. It localises to the invadopodium. The protein localises to the nucleus. Its subcellular location is the nucleoplasm. The protein resides in the chromosome. It is found in the cytoskeleton. It localises to the microtubule organizing center. The protein localises to the centrosome. The enzyme catalyses L-seryl-[protein] + ATP = O-phospho-L-seryl-[protein] + ADP + H(+). The catalysed reaction is L-threonyl-[protein] + ATP = O-phospho-L-threonyl-[protein] + ADP + H(+). Phosphorylation of Thr-84 by OXSR1 inhibits activation. Activated by binding small G proteins. Binding of GTP-bound CDC42 or RAC1 to the autoregulatory region releases monomers from the autoinhibited dimer, and enables activation by phosphorylation of Thr-422. Protein kinase involved in intracellular signaling pathways downstream of integrins and receptor-type kinases that plays an important role in cytoskeleton dynamics, in cell adhesion, migration, proliferation, apoptosis, mitosis, and in vesicle-mediated transport processes. Can directly phosphorylate BAD and protects cells against apoptosis. Activated by interaction with CDC42 and RAC1. Functions as a GTPase effector that links the Rho-related GTPases CDC42 and RAC1 to the JNK MAP kinase pathway. Phosphorylates and activates MAP2K1, and thereby mediates activation of downstream MAP kinases. Involved in the reorganization of the actin cytoskeleton, actin stress fibers and of focal adhesion complexes. Phosphorylates the tubulin chaperone TBCB and thereby plays a role in the regulation of microtubule biogenesis and organization of the tubulin cytoskeleton. Plays a role in the regulation of insulin secretion in response to elevated glucose levels. Part of a ternary complex that contains PAK1, DVL1 and MUSK that is important for MUSK-dependent regulation of AChR clustering during the formation of the neuromuscular junction (NMJ). Activity is inhibited in cells undergoing apoptosis, potentially due to binding of CDC2L1 and CDC2L2. Phosphorylates MYL9/MLC2. Phosphorylates RAF1 at 'Ser-338' and 'Ser-339' resulting in: activation of RAF1, stimulation of RAF1 translocation to mitochondria, phosphorylation of BAD by RAF1, and RAF1 binding to BCL2. Phosphorylates SNAI1 at 'Ser-246' promoting its transcriptional repressor activity by increasing its accumulation in the nucleus. In podocytes, promotes NR3C2 nuclear localization. Required for atypical chemokine receptor ACKR2-induced phosphorylation of LIMK1 and cofilin (CFL1) and for the up-regulation of ACKR2 from endosomal compartment to cell membrane, increasing its efficiency in chemokine uptake and degradation. In synapses, seems to mediate the regulation of F-actin cluster formation performed by SHANK3, maybe through CFL1 phosphorylation and inactivation. Plays a role in RUFY3-mediated facilitating gastric cancer cells migration and invasion. In response to DNA damage, phosphorylates MORC2 which activates its ATPase activity and facilitates chromatin remodeling. In neurons, plays a crucial role in regulating GABA(A) receptor synaptic stability and hence GABAergic inhibitory synaptic transmission through its role in F-actin stabilization. In hippocampal neurons, necessary for the formation of dendritic spines and excitatory synapses; this function is dependent on kinase activity and may be exerted by the regulation of actomyosin contractility through the phosphorylation of myosin II regulatory light chain (MLC). Along with GIT1, positively regulates microtubule nucleation during interphase. Phosphorylates FXR1, promoting its localization to stress granules and activity. Phosphorylates ILK on 'Thr-173' and 'Ser-246', promoting nuclear export of ILK. The protein is Serine/threonine-protein kinase PAK 1 of Bos taurus (Bovine).